A 305-amino-acid polypeptide reads, in one-letter code: HPr kinase/phosphorylase (305 aa).

Residues His136 and Lys157 contribute to the active site. 151–158 contacts ATP; the sequence is GESGIGKS. Residue Ser158 coordinates Mg(2+). Asp175 acts as the Proton acceptor; for phosphorylation activity. Proton donor; for dephosphorylation activity in catalysis. Positions 198-207 are important for the catalytic mechanism of both phosphorylation and dephosphorylation; sequence LEVRGLGIID. Glu199 serves as a coordination point for Mg(2+). Arg240 is a catalytic residue. The segment at 261–266 is important for the catalytic mechanism of dephosphorylation; it reads PIRPGR.

It belongs to the HPrK/P family. In terms of assembly, homohexamer. Mg(2+) serves as cofactor.

The enzyme catalyses [HPr protein]-L-serine + ATP = [HPr protein]-O-phospho-L-serine + ADP + H(+). It carries out the reaction [HPr protein]-O-phospho-L-serine + phosphate + H(+) = [HPr protein]-L-serine + diphosphate. Its function is as follows. Catalyzes the ATP- as well as the pyrophosphate-dependent phosphorylation of a specific serine residue in HPr, a phosphocarrier protein of the phosphoenolpyruvate-dependent sugar phosphotransferase system (PTS). HprK/P also catalyzes the pyrophosphate-producing, inorganic phosphate-dependent dephosphorylation (phosphorolysis) of seryl-phosphorylated HPr (P-Ser-HPr). The two antagonistic activities of HprK/P are regulated by several intracellular metabolites, which change their concentration in response to the absence or presence of rapidly metabolisable carbon sources (glucose, fructose, etc.) in the growth medium. Therefore, by controlling the phosphorylation state of HPr, HPrK/P is a sensor enzyme that plays a major role in the regulation of carbon metabolism and sugar transport: it mediates carbon catabolite repression (CCR), and regulates PTS-catalyzed carbohydrate uptake and inducer exclusion. In Clostridium tetani (strain Massachusetts / E88), this protein is HPr kinase/phosphorylase.